A 142-amino-acid chain; its full sequence is Transcriptional regulator MraZ (142 aa).

2 SpoVT-AbrB domains span residues 5 to 51 and 77 to 120; these read ASSL…PRPV and ASDV…DAAR.

The protein belongs to the MraZ family. Forms oligomers.

The protein localises to the cytoplasm. It is found in the nucleoid. The polypeptide is Transcriptional regulator MraZ (Herminiimonas arsenicoxydans).